Consider the following 299-residue polypeptide: Inactive recombination-promoting nuclease-like protein RpnE (299 aa).

Belongs to the Rpn/YhgA-like nuclease family.

Functionally, upon expression has no effect on RecA-independent DNA recombination, cell viability or DNA damage. This Escherichia coli (strain K12) protein is Inactive recombination-promoting nuclease-like protein RpnE (yfaD).